The sequence spans 737 residues: Polyribonucleotide nucleotidyltransferase (737 aa).

Positions 489 and 495 each coordinate Mg(2+). The 60-residue stretch at 556-615 (PKIDTIKIDVDKIKIVIGKGGETIDKIIAETGVKIDIDEEGNVSIYSSDQDAINRAKEII) folds into the KH domain. One can recognise an S1 motif domain in the interval 625–693 (DEVYRAKVVR…EKGRIDASMK (69 aa)). Residues 691 to 737 (SMKALLPRPPKPEHDEKGEKSERPHRPRHQKDYKPKKEFTETSKDSE) form a disordered region. The span at 700-737 (PKPEHDEKGEKSERPHRPRHQKDYKPKKEFTETSKDSE) shows a compositional bias: basic and acidic residues.

This sequence belongs to the polyribonucleotide nucleotidyltransferase family. It depends on Mg(2+) as a cofactor.

The protein localises to the cytoplasm. It catalyses the reaction RNA(n+1) + phosphate = RNA(n) + a ribonucleoside 5'-diphosphate. In terms of biological role, involved in mRNA degradation. Catalyzes the phosphorolysis of single-stranded polyribonucleotides processively in the 3'- to 5'-direction. The polypeptide is Polyribonucleotide nucleotidyltransferase (Streptococcus pneumoniae serotype 4 (strain ATCC BAA-334 / TIGR4)).